We begin with the raw amino-acid sequence, 475 residues long: Kynureninase (475 aa).

Residues leucine 142, threonine 143, 170 to 173, aspartate 255, histidine 258, and tyrosine 280 contribute to the pyridoxal 5'-phosphate site; that span reads FPSD. Lysine 281 carries the post-translational modification N6-(pyridoxal phosphate)lysine. Tryptophan 320 and asparagine 348 together coordinate pyridoxal 5'-phosphate.

The protein belongs to the kynureninase family. As to quaternary structure, homodimer. Pyridoxal 5'-phosphate is required as a cofactor.

The protein localises to the cytoplasm. It carries out the reaction L-kynurenine + H2O = anthranilate + L-alanine + H(+). It catalyses the reaction 3-hydroxy-L-kynurenine + H2O = 3-hydroxyanthranilate + L-alanine + H(+). It functions in the pathway amino-acid degradation; L-kynurenine degradation; L-alanine and anthranilate from L-kynurenine: step 1/1. Its pathway is cofactor biosynthesis; NAD(+) biosynthesis; quinolinate from L-kynurenine: step 2/3. Catalyzes the cleavage of L-kynurenine (L-Kyn) and L-3-hydroxykynurenine (L-3OHKyn) into anthranilic acid (AA) and 3-hydroxyanthranilic acid (3-OHAA), respectively. The polypeptide is Kynureninase (bna5) (Botryotinia fuckeliana (strain B05.10) (Noble rot fungus)).